Here is a 182-residue protein sequence, read N- to C-terminus: MNKQPEDWLDDVPENIDEEDDEIIWVSKSEIKRDAEALKDLGVELVELGKNALERIPLDEDLRAAIDLAQKIKKEGRRRQLQLIGKMLRARDVEPIQTALDKLKNRHNQQVSLFHKLEALRDRLVEEGDDAIPPILALYPEADRQQLRSLVRNAQKEKAANKPPKAYRQIFQYLRDLAETAE.

The protein belongs to the DarP family.

The protein resides in the cytoplasm. Member of a network of 50S ribosomal subunit biogenesis factors which assembles along the 30S-50S interface, preventing incorrect 23S rRNA structures from forming. Promotes peptidyl transferase center (PTC) maturation. The chain is Dual-action ribosomal maturation protein DarP from Serratia proteamaculans (strain 568).